A 234-amino-acid polypeptide reads, in one-letter code: Immune-associated nucleotide-binding protein 2 (234 aa).

The 203-residue stretch at 21–223 (KPVKNIVLVG…YTEDMYRNIK (203 aa)) folds into the AIG1-type G domain. GTP-binding positions include 30 to 38 (GRSVNGICT), serine 51, and asparagine 183.

Belongs to the TRAFAC class TrmE-Era-EngA-EngB-Septin-like GTPase superfamily. AIG1/Toc34/Toc159-like paraseptin GTPase family. IAN subfamily. As to expression, mostly expressed in pollen. Also detected in lateral roots and radicles.

The chain is Immune-associated nucleotide-binding protein 2 from Arabidopsis thaliana (Mouse-ear cress).